Reading from the N-terminus, the 446-residue chain is Elongation factor 1-alpha (446 aa).

Residues 5–230 (KNHLNLVVIG…DALDQPKRPK (226 aa)) enclose the tr-type G domain. A G1 region spans residues 14–21 (GHVDSGKS). 14–21 (GHVDSGKS) serves as a coordination point for GTP. The segment at 70 to 74 (GITID) is G2. The G3 stretch occupies residues 91-94 (DAPG). Residues 91-95 (DAPGH) and 153-156 (NKMD) each bind GTP. The interval 153–156 (NKMD) is G4. The interval 194-196 (SGW) is G5.

The protein belongs to the TRAFAC class translation factor GTPase superfamily. Classic translation factor GTPase family. EF-Tu/EF-1A subfamily.

It localises to the cytoplasm. Functionally, this protein promotes the GTP-dependent binding of aminoacyl-tRNA to the A-site of ribosomes during protein biosynthesis. This chain is Elongation factor 1-alpha (EFAA), found in Stylonychia lemnae (Ciliate).